Consider the following 725-residue polypeptide: IML2-like protein YKR018C (725 aa).

Thr196 carries the post-translational modification Phosphothreonine. A phosphoserine mark is found at Ser246, Ser377, and Ser380.

Belongs to the IML2 family.

The protein localises to the cytoplasm. Its subcellular location is the nucleus. The sequence is that of IML2-like protein YKR018C from Saccharomyces cerevisiae (strain ATCC 204508 / S288c) (Baker's yeast).